The chain runs to 366 residues: Short-chain collagen C4 (366 aa).

Low complexity predominate over residues 1–14 (DTGPQGPQGVAGPP). Triple-helical region regions lie at residues 1-23 (DTGP…KGDK) and 40-210 (GPPG…NGAV). Positions 1–207 (DTGPQGPQGV…QGPQGAPGSN (207 aa)) are disordered. Pro residues predominate over residues 28–45 (YPPPPTCPTCPAGPPGAP). Low complexity-rich tracts occupy residues 75-90 (PGND…PGYD) and 99-110 (TGAPGPQGPKGD). A compositionally biased stretch (basic and acidic residues) spans 138–149 (DGQDGAKGDKGD). Composition is skewed to low complexity over residues 150-168 (QGPA…QGPA) and 189-201 (QGPK…QGPQ).

Its subcellular location is the secreted. It is found in the extracellular space. The protein resides in the extracellular matrix. In Ephydatia muelleri (Mueller's freshwater sponge), this protein is Short-chain collagen C4.